The sequence spans 637 residues: Glutamate--cysteine ligase catalytic subunit (637 aa).

Residue Met1 is modified to N-acetylmethionine. Phosphoserine is present on residues Ser5 and Ser8.

It belongs to the glutamate--cysteine ligase type 3 family. Heterodimer of a catalytic heavy chain and a regulatory light chain.

The catalysed reaction is L-cysteine + L-glutamate + ATP = gamma-L-glutamyl-L-cysteine + ADP + phosphate + H(+). It catalyses the reaction (2S)-2-aminobutanoate + L-glutamate + ATP = gamma-L-glutamyl-(2S)-2-aminobutanoate + ADP + phosphate + H(+). It participates in sulfur metabolism; glutathione biosynthesis; glutathione from L-cysteine and L-glutamate: step 1/2. Its activity is regulated as follows. Feedback inhibition by glutathione. Its function is as follows. Catalyzes the ATP-dependent ligation of L-glutamate and L-cysteine and participates in the first and rate-limiting step in glutathione biosynthesis. The polypeptide is Glutamate--cysteine ligase catalytic subunit (Homo sapiens (Human)).